The sequence spans 497 residues: 3-octaprenyl-4-hydroxybenzoate carboxy-lyase (497 aa).

Asn-175 contributes to the Mn(2+) binding site. Prenylated FMN contacts are provided by residues 178–180 (IYR), 192–194 (RWL), and 197–198 (RG). Glu-241 contacts Mn(2+). Catalysis depends on Asp-290, which acts as the Proton donor.

This sequence belongs to the UbiD family. Homohexamer. It depends on prenylated FMN as a cofactor. Requires Mn(2+) as cofactor.

The protein resides in the cell membrane. It catalyses the reaction a 4-hydroxy-3-(all-trans-polyprenyl)benzoate + H(+) = a 2-(all-trans-polyprenyl)phenol + CO2. It functions in the pathway cofactor biosynthesis; ubiquinone biosynthesis. Catalyzes the decarboxylation of 3-octaprenyl-4-hydroxy benzoate to 2-octaprenylphenol, an intermediate step in ubiquinone biosynthesis. The chain is 3-octaprenyl-4-hydroxybenzoate carboxy-lyase from Escherichia coli O157:H7.